A 90-amino-acid chain; its full sequence is UPF0237 protein MK1213 (90 aa).

Residues 5–79 form the ACT domain; that stretch reads VVTVIGADRP…EELGVDVIVQ (75 aa).

It belongs to the UPF0237 family.

This is UPF0237 protein MK1213 from Methanopyrus kandleri (strain AV19 / DSM 6324 / JCM 9639 / NBRC 100938).